The chain runs to 415 residues: Prostacyclin receptor (415 aa).

Residues 1-21 (MMASDGHPGPPSVTPGSPLSA) form a disordered region. The Extracellular portion of the chain corresponds to 1 to 44 (MMASDGHPGPPSVTPGSPLSAGGREWQGMAGSCWNITYVQDSVG). 2 cysteine pairs are disulfide-bonded: Cys-33/Cys-193 and Cys-120/Cys-198. N-linked (GlcNAc...) asparagine glycosylation is present at Asn-35. A helical transmembrane segment spans residues 45 to 66 (PATSTLMFVAGVVGNGLALGIL). The Cytoplasmic portion of the chain corresponds to 67–79 (GARRRSHPSAFAV). Residues 80 to 104 (LVTGLAVTDLLGTCFLSPAVFVAYA) form a helical membrane-spanning segment. The Extracellular segment spans residues 105–122 (RNSSLLGLAHGGTMLCDT). The helical transmembrane segment at 123–143 (FAFAMTFFGLASTLILFAMAV) threads the bilayer. Over 144 to 162 (ERCLALSHPYLYAQLDGPR) the chain is Cytoplasmic. Residues 163–186 (CARFALPSIYAFCCLFCSLPLLGL) traverse the membrane as a helical segment. At 187–215 (GEHQQYCPGSWCFIRMRSAQPGGCAFSLA) the chain is on the extracellular side. The helical transmembrane segment at 216 to 236 (YASLMALLVTSIFFCNGSVTL) threads the bilayer. Residues 237–263 (SLYHMYRQQRRHHGSFVPTSRAREDEV) are Cytoplasmic-facing. Residues 264-288 (YHLILLALMTVIMAVCSLPLMIRGF) traverse the membrane as a helical segment. Residues 289–301 (TQAIAPDSREMGD) lie on the Extracellular side of the membrane. The chain crosses the membrane as a helical span at residues 302-322 (LLAFRFNAFNPILDPWVFILF). The Cytoplasmic portion of the chain corresponds to 323–415 (RKAVFQRLKF…SEAIAACSLC (93 aa)). The disordered stretch occupies residues 349–370 (PLSRPASGRRDPPAPTSLQAKE). At Ser-365 the chain carries Phosphoserine. Cys-412 is modified (cysteine methyl ester). Cys-412 is lipidated: S-farnesyl cysteine. A propeptide spans 413–415 (SLC) (removed in mature form).

The protein belongs to the G-protein coupled receptor 1 family. Interacts (non-isoprenylated C-terminus) with PDZK1. Post-translationally, isoprenylation does not influence ligand binding but is required for efficient coupling to the effectors adenylyl cyclase and phospholipase C.

It is found in the cell membrane. Its function is as follows. Receptor for prostacyclin (prostaglandin I2 or PGI2). The activity of this receptor is mediated by G(s) proteins which activate adenylate cyclase. The chain is Prostacyclin receptor (Ptgir) from Mus musculus (Mouse).